Reading from the N-terminus, the 95-residue chain is Small ribosomal subunit protein uS19 (95 aa).

Belongs to the universal ribosomal protein uS19 family.

In terms of biological role, protein S19 forms a complex with S13 that binds strongly to the 16S ribosomal RNA. This Thermodesulfovibrio yellowstonii (strain ATCC 51303 / DSM 11347 / YP87) protein is Small ribosomal subunit protein uS19.